The chain runs to 389 residues: Metal tolerance protein 2 (389 aa).

The Cytoplasmic segment spans residues 1-81 (MGFRLAHLAA…GGEASERIFR (81 aa)). A helical transmembrane segment spans residues 82–102 (LGLAADVVLTVGKAVTGYLSG). Over 103–104 (ST) the chain is Vacuolar. Residues 105-125 (AIAADAAHSLSDIVLSGVALL) form a helical membrane-spanning segment. Topologically, residues 126-148 (SYKAAKAPRDKEHPYGHGKFESL) are cytoplasmic. A helical transmembrane segment spans residues 149–169 (GALGISSMLLVTAGGIAWHAF). At 170–206 (DVLQGVMSSAPDIIGNVSHAHHSHGSSGHHHGIDLEH) the chain is on the vacuolar side. A helical transmembrane segment spans residues 207-227 (PILALSVTAFAISVKEGLYWI). Residues 228–250 (TKRAGEKEGSGLMKANAWHHRSD) are Cytoplasmic-facing. A helical transmembrane segment spans residues 251-271 (AISSVVALLGVGGSILGVPYL). At 272–275 (DPLA) the chain is on the vacuolar side. Residues 276–296 (GLVVSGMILKAGVHTGYESVL) traverse the membrane as a helical segment. At 297 to 389 (ELVDAAVDPS…SLQPLNQNAL (93 aa)) the chain is on the cytoplasmic side.

It belongs to the cation diffusion facilitator (CDF) transporter (TC 2.A.4) family. SLC30A subfamily.

The protein resides in the vacuole membrane. Its function is as follows. Involved in sequestration of excess metal in the cytoplasm into vacuoles to maintain metal homeostasis. The polypeptide is Metal tolerance protein 2 (MTP2) (Oryza sativa subsp. japonica (Rice)).